The primary structure comprises 603 residues: Geraniol synthase Tps-5073G30, chloroplastic (603 aa).

A chloroplast-targeting transit peptide spans 1 to 35; that stretch reads MCSISQKVVIGLNKAAANNNLQNLDRRGFKTRCVS. Residues Arg-319, Asp-356, Asp-360, Arg-497, and Asp-500 each contribute to the (2E)-geranyl diphosphate site. Residues Asp-356 and Asp-360 each contribute to the Mg(2+) site. A DDXXD motif motif is present at residues 356 to 360; sequence DDVYD. Mg(2+)-binding residues include Asp-500, Thr-504, and Glu-508.

It belongs to the terpene synthase family. Tpsb subfamily. As to quaternary structure, monomer. The cofactor is Mg(2+). Mn(2+) is required as a cofactor.

It is found in the plastid. It localises to the chloroplast. It catalyses the reaction (2E)-geranyl diphosphate + H2O = (2E)-geraniol + diphosphate. It functions in the pathway secondary metabolite biosynthesis; terpenoid biosynthesis. Functionally, monoterpene synthase (mono-TPS) involved in the biosynthesis of monoterpenes natural products. Catalyzes the conversion of (2E)-geranyl diphosphate (GPP) into geraniol. This chain is Geraniol synthase Tps-5073G30, chloroplastic, found in Perilla frutescens (Beefsteak mint).